A 99-amino-acid chain; its full sequence is MISEERLLKVILAPHISEKSTVCAENNNTVVFRVAIDATKAEVKAAVAKLFEVEVDSVRTLVNKGKTKRHGARTGRRSDWKKAYVTLAAGADIDFVGAE.

It belongs to the universal ribosomal protein uL23 family. In terms of assembly, part of the 50S ribosomal subunit. Contacts protein L29, and trigger factor when it is bound to the ribosome.

One of the early assembly proteins it binds 23S rRNA. One of the proteins that surrounds the polypeptide exit tunnel on the outside of the ribosome. Forms the main docking site for trigger factor binding to the ribosome. The chain is Large ribosomal subunit protein uL23 from Shewanella loihica (strain ATCC BAA-1088 / PV-4).